A 692-amino-acid chain; its full sequence is Elongation factor G 1 (692 aa).

Residues 8-283 (EKTRNIGIMA…SVVEYLPSPV (276 aa)) enclose the tr-type G domain. Residues 17-24 (AHIDAGKT), 81-85 (DTPGH), and 135-138 (NKMD) each bind GTP.

Belongs to the TRAFAC class translation factor GTPase superfamily. Classic translation factor GTPase family. EF-G/EF-2 subfamily.

It localises to the cytoplasm. Its function is as follows. Catalyzes the GTP-dependent ribosomal translocation step during translation elongation. During this step, the ribosome changes from the pre-translocational (PRE) to the post-translocational (POST) state as the newly formed A-site-bound peptidyl-tRNA and P-site-bound deacylated tRNA move to the P and E sites, respectively. Catalyzes the coordinated movement of the two tRNA molecules, the mRNA and conformational changes in the ribosome. The polypeptide is Elongation factor G 1 (Geobacter metallireducens (strain ATCC 53774 / DSM 7210 / GS-15)).